The primary structure comprises 157 residues: Small ribosomal subunit protein uS7 (157 aa).

The protein belongs to the universal ribosomal protein uS7 family. As to quaternary structure, part of the 30S ribosomal subunit. Contacts proteins S9 and S11.

Functionally, one of the primary rRNA binding proteins, it binds directly to 16S rRNA where it nucleates assembly of the head domain of the 30S subunit. Is located at the subunit interface close to the decoding center, probably blocks exit of the E-site tRNA. This Polaromonas sp. (strain JS666 / ATCC BAA-500) protein is Small ribosomal subunit protein uS7.